We begin with the raw amino-acid sequence, 371 residues long: D-alanine--D-alanine ligase (371 aa).

The region spanning 154 to 361 (KKLLVAEGLP…YPTLLAAMVD (208 aa)) is the ATP-grasp domain. Position 182–237 (182–237 (RERLGLPVFVKPARGGSSIGVSRVSDWAELPAAIEAARRHDPKVIVEAGIAGRELE)) interacts with ATP. Positions 316, 328, and 330 each coordinate Mg(2+).

This sequence belongs to the D-alanine--D-alanine ligase family. The cofactor is Mg(2+). It depends on Mn(2+) as a cofactor.

The protein localises to the cytoplasm. It carries out the reaction 2 D-alanine + ATP = D-alanyl-D-alanine + ADP + phosphate + H(+). The protein operates within cell wall biogenesis; peptidoglycan biosynthesis. Its function is as follows. Cell wall formation. The protein is D-alanine--D-alanine ligase of Mycobacterium sp. (strain JLS).